A 257-amino-acid polypeptide reads, in one-letter code: GTP cyclohydrolase FolE2 (257 aa).

This sequence belongs to the GTP cyclohydrolase IV family.

The catalysed reaction is GTP + H2O = 7,8-dihydroneopterin 3'-triphosphate + formate + H(+). It participates in cofactor biosynthesis; 7,8-dihydroneopterin triphosphate biosynthesis; 7,8-dihydroneopterin triphosphate from GTP: step 1/1. Converts GTP to 7,8-dihydroneopterin triphosphate. This chain is GTP cyclohydrolase FolE2, found in Dictyoglomus turgidum (strain DSM 6724 / Z-1310).